Consider the following 711-residue polypeptide: Arginine decarboxylase 2 (711 aa).

At lysine 147 the chain carries N6-(pyridoxal phosphate)lysine. 331–341 (IDIGGGLGIDY) is a binding site for substrate. The interval 642–661 (MHTKGGSEGENEEEEEDDEF) is disordered. The segment covering 650-661 (GENEEEEEDDEF) has biased composition (acidic residues).

It belongs to the Orn/Lys/Arg decarboxylase class-II family. SpeA subfamily. As to quaternary structure, homodimer and heterodimer with ADC1. Pyridoxal 5'-phosphate serves as cofactor. It depends on Mg(2+) as a cofactor.

It localises to the plastid. Its subcellular location is the chloroplast. The protein localises to the cytoplasm. It is found in the cytosol. The enzyme catalyses L-arginine + H(+) = agmatine + CO2. It functions in the pathway amine and polyamine biosynthesis; agmatine biosynthesis; agmatine from L-arginine: step 1/1. Its function is as follows. Required for the biosynthesis of putrescine. Catalyzes the first step of polyamine (PA) biosynthesis to produce putrescine from arginine. Is a major contributor to basal arginine decarboxylase (ADC) activity and putrescine biosynthesis. Accumulation of putrescine plays a positive role in salt stress tolerance. Accumulation of putrescine plays a positive role in freezing tolerance. Production of PA is essential for normal seed development. Controls PA homeostasis which is crucial for normal plant growth and development. This Arabidopsis thaliana (Mouse-ear cress) protein is Arginine decarboxylase 2.